The sequence spans 185 residues: TATA-box-binding protein (185 aa).

2 tandem repeats follow at residues 8–84 (IENI…VEML) and 99–175 (IQNM…LHEL).

Belongs to the TBP family.

Its function is as follows. General factor that plays a role in the activation of archaeal genes transcribed by RNA polymerase. Binds specifically to the TATA box promoter element which lies close to the position of transcription initiation. The chain is TATA-box-binding protein from Thermococcus sibiricus (strain DSM 12597 / MM 739).